We begin with the raw amino-acid sequence, 170 residues long: Large ribosomal subunit protein uL10 (170 aa).

It belongs to the universal ribosomal protein uL10 family. As to quaternary structure, part of the ribosomal stalk of the 50S ribosomal subunit. The N-terminus interacts with L11 and the large rRNA to form the base of the stalk. The C-terminus forms an elongated spine to which L12 dimers bind in a sequential fashion forming a multimeric L10(L12)X complex.

Its function is as follows. Forms part of the ribosomal stalk, playing a central role in the interaction of the ribosome with GTP-bound translation factors. In Corynebacterium urealyticum (strain ATCC 43042 / DSM 7109), this protein is Large ribosomal subunit protein uL10.